Here is a 618-residue protein sequence, read N- to C-terminus: 1-deoxy-D-xylulose-5-phosphate synthase (618 aa).

Thiamine diphosphate contacts are provided by residues His76 and 117–119 (GHS). A Mg(2+)-binding site is contributed by Asp148. Thiamine diphosphate is bound by residues 149–150 (GA), Asn177, Tyr284, and Glu366. Position 177 (Asn177) interacts with Mg(2+).

It belongs to the transketolase family. DXPS subfamily. As to quaternary structure, homodimer. Mg(2+) is required as a cofactor. The cofactor is thiamine diphosphate.

The catalysed reaction is D-glyceraldehyde 3-phosphate + pyruvate + H(+) = 1-deoxy-D-xylulose 5-phosphate + CO2. It participates in metabolic intermediate biosynthesis; 1-deoxy-D-xylulose 5-phosphate biosynthesis; 1-deoxy-D-xylulose 5-phosphate from D-glyceraldehyde 3-phosphate and pyruvate: step 1/1. Catalyzes the acyloin condensation reaction between C atoms 2 and 3 of pyruvate and glyceraldehyde 3-phosphate to yield 1-deoxy-D-xylulose-5-phosphate (DXP). In Dechloromonas aromatica (strain RCB), this protein is 1-deoxy-D-xylulose-5-phosphate synthase.